Reading from the N-terminus, the 206-residue chain is MTKRTSAKYKIDRRMGENIWGRPKSPVNRREYGPGQHGQRRKGKLSDFGLQLRAKQKLKGYYGDLTEKQFRRIYAEAERLRGDTGEFLIGLLERRLDAVVYRAKFVPTVFAARQFVNHGHVTVNGQKVNIPSYRVKEGDVIAVRDKSKQLAVVLEAVGLAERDVPDYVDADHSKMTATFVRTPGLSDVPYPVVMEPNLVVEFYAKN.

The interval Asn-18–Lys-44 is disordered. The 64-residue stretch at Arg-94 to Val-157 folds into the S4 RNA-binding domain.

This sequence belongs to the universal ribosomal protein uS4 family. In terms of assembly, part of the 30S ribosomal subunit. Contacts protein S5. The interaction surface between S4 and S5 is involved in control of translational fidelity.

One of the primary rRNA binding proteins, it binds directly to 16S rRNA where it nucleates assembly of the body of the 30S subunit. In terms of biological role, with S5 and S12 plays an important role in translational accuracy. The sequence is that of Small ribosomal subunit protein uS4 from Jannaschia sp. (strain CCS1).